The chain runs to 233 residues: Leucyl/phenylalanyl-tRNA--protein transferase (233 aa).

This sequence belongs to the L/F-transferase family.

It localises to the cytoplasm. The catalysed reaction is N-terminal L-lysyl-[protein] + L-leucyl-tRNA(Leu) = N-terminal L-leucyl-L-lysyl-[protein] + tRNA(Leu) + H(+). It catalyses the reaction N-terminal L-arginyl-[protein] + L-leucyl-tRNA(Leu) = N-terminal L-leucyl-L-arginyl-[protein] + tRNA(Leu) + H(+). The enzyme catalyses L-phenylalanyl-tRNA(Phe) + an N-terminal L-alpha-aminoacyl-[protein] = an N-terminal L-phenylalanyl-L-alpha-aminoacyl-[protein] + tRNA(Phe). Functionally, functions in the N-end rule pathway of protein degradation where it conjugates Leu, Phe and, less efficiently, Met from aminoacyl-tRNAs to the N-termini of proteins containing an N-terminal arginine or lysine. In Desulfatibacillum aliphaticivorans, this protein is Leucyl/phenylalanyl-tRNA--protein transferase.